We begin with the raw amino-acid sequence, 451 residues long: UDP-N-acetylmuramoylalanine--D-glutamate ligase (451 aa).

Residue 118 to 124 (GTKGKST) coordinates ATP.

It belongs to the MurCDEF family.

The protein localises to the cytoplasm. The catalysed reaction is UDP-N-acetyl-alpha-D-muramoyl-L-alanine + D-glutamate + ATP = UDP-N-acetyl-alpha-D-muramoyl-L-alanyl-D-glutamate + ADP + phosphate + H(+). Its pathway is cell wall biogenesis; peptidoglycan biosynthesis. Cell wall formation. Catalyzes the addition of glutamate to the nucleotide precursor UDP-N-acetylmuramoyl-L-alanine (UMA). In Borreliella burgdorferi (strain ZS7) (Borrelia burgdorferi), this protein is UDP-N-acetylmuramoylalanine--D-glutamate ligase.